Here is an 87-residue protein sequence, read N- to C-terminus: U-scoloptoxin(23)-Er1a (87 aa).

The N-terminal stretch at 1 to 29 (MSLIVVRTHSFLFVLVLLLFASVFHSVDS) is a signal peptide. The segment at 32-54 (FNPNGRYGRRDSASALSDASENK) is disordered.

It belongs to the scoloptoxin-23 family. As to expression, expressed by the venom gland.

The protein localises to the secreted. The protein is U-scoloptoxin(23)-Er1a of Ethmostigmus rubripes (Giant centipede).